The chain runs to 202 residues: Small ribosomal subunit protein uS4c (202 aa).

The S4 RNA-binding domain maps to 90–158; that stretch reads MRLDNIIFRL…MKRSRDSYEK (69 aa).

This sequence belongs to the universal ribosomal protein uS4 family. Part of the 30S ribosomal subunit. Contacts protein S5. The interaction surface between S4 and S5 is involved in control of translational fidelity.

The protein localises to the plastid. It localises to the chloroplast. In terms of biological role, one of the primary rRNA binding proteins, it binds directly to 16S rRNA where it nucleates assembly of the body of the 30S subunit. With S5 and S12 plays an important role in translational accuracy. The polypeptide is Small ribosomal subunit protein uS4c (rps4) (Anthoceros angustus (Hornwort)).